The primary structure comprises 400 residues: Tryptophan--tRNA ligase (400 aa).

The 'HIGH' region motif lies at 12-20 (PTGALHLGH). The interval 173–241 (REPGFEQKAL…RLFGYLEGAR (69 aa)) is insert. Positions 265 to 269 (KMSKS) match the 'KMSKS' region motif. Lys268 contributes to the ATP binding site. Residues 280-305 (KASVEKKVRTMPTDPARVRRTDPGDP) form a disordered region. Positions 295–304 (ARVRRTDPGD) are enriched in basic and acidic residues.

This sequence belongs to the class-I aminoacyl-tRNA synthetase family. Homodimer.

The protein localises to the cytoplasm. The catalysed reaction is tRNA(Trp) + L-tryptophan + ATP = L-tryptophyl-tRNA(Trp) + AMP + diphosphate + H(+). This chain is Tryptophan--tRNA ligase (trpS), found in Ralstonia nicotianae (strain ATCC BAA-1114 / GMI1000) (Ralstonia solanacearum).